The following is a 397-amino-acid chain: Decapping and exoribonuclease protein (397 aa).

Residues Arg-58, Glu-101, and 131-133 (WRG) each bind substrate. Glu-192 lines the Mg(2+) pocket. Substrate contacts are provided by Cys-217 and Glu-234. The Mg(2+) site is built by Glu-234, Asp-236, Glu-253, and Leu-254. The substrate site is built by Lys-255 and Gln-280. The residue at position 392 (Thr-392) is a Phosphothreonine. Ser-394 bears the Phosphoserine mark.

Belongs to the DXO/Dom3Z family. Mg(2+) is required as a cofactor.

The protein resides in the nucleus. It carries out the reaction a 5'-end triphospho-ribonucleoside in mRNA + H2O = a 5'-end phospho-ribonucleoside in mRNA + diphosphate + H(+). It catalyses the reaction a 5'-end NAD(+)-phospho-ribonucleoside in mRNA + H2O = a 5'-end phospho-ribonucleoside in mRNA + NAD(+) + H(+). The enzyme catalyses a 5'-end NAD(+)-phospho-ribonucleoside in snoRNA + H2O = a 5'-end phospho-ribonucleoside in snoRNA + NAD(+) + H(+). The catalysed reaction is a 5'-end (N(7)-methyl 5'-triphosphoguanosine)-ribonucleoside-ribonucleotide in mRNA + H2O = a (N(7)-methyl 5'-triphosphoguanosine)-nucleoside + a 5'-end phospho-ribonucleoside in mRNA + H(+). It carries out the reaction a 5'-end FAD-phospho-ribonucleoside in mRNA + H2O = a 5'-end phospho-ribonucleoside in mRNA + FAD + H(+). It catalyses the reaction a 5'-end CoA-ribonucleoside in mRNA + H2O = 3'-dephospho-CoA + a 5'-end phospho-ribonucleoside in mRNA + H(+). Decapping enzyme for NAD-capped RNAs: specifically hydrolyzes the nicotinamide adenine dinucleotide (NAD) cap from a subset of RNAs by removing the entire NAD moiety from the 5'-end of an NAD-capped RNA. The NAD-cap is present at the 5'-end of some RNAs and snoRNAs. In contrast to the canonical 5'-end N7 methylguanosine (m7G) cap, the NAD cap promotes mRNA decay. Preferentially acts on NAD-capped transcripts in response to environmental stress. Also acts as a non-canonical decapping enzyme that removes the entire cap structure of m7G capped or incompletely capped RNAs and mediates their subsequent degradation. Specifically degrades pre-mRNAs with a defective 5'-end m7G cap and is part of a pre-mRNA capping quality control. Has decapping activity toward incomplete 5'-end m7G cap mRNAs such as unmethylated 5'-end-capped RNA (cap0), while it has no activity toward 2'-O-ribose methylated m7G cap (cap1). In contrast to canonical decapping enzymes DCP2 and NUDT16, which cleave the cap within the triphosphate linkage, the decapping activity releases the entire cap structure GpppN and a 5'-end monophosphate RNA. Also has 5'-3' exoribonuclease activities: The 5'-end monophosphate RNA is then degraded by the 5'-3' exoribonuclease activity, enabling this enzyme to decap and degrade incompletely capped mRNAs. Also possesses RNA 5'-pyrophosphohydrolase activity by hydrolyzing the 5'-end triphosphate to release pyrophosphates. Exhibits decapping activity towards FAD-capped RNAs. Exhibits decapping activity towards dpCoA-capped RNAs in vitro. The polypeptide is Decapping and exoribonuclease protein (Rattus norvegicus (Rat)).